A 218-amino-acid chain; its full sequence is Capsid protein (218 aa).

N-acetylmethionine; by host is present on M1. A disordered region spans residues 1–30 (MDKSGSPNASRTSRRRRPRRGSRSASGADA). Basic residues predominate over residues 12–22 (TSRRRRPRRGS).

It belongs to the cucumovirus capsid protein family.

The protein resides in the virion. In terms of biological role, capsid protein. Probably binds RNA and plays a role in packaging. The protein is Capsid protein of Cucumis sativus (Cucumber).